A 399-amino-acid chain; its full sequence is Bombesin receptor subtype-3 (399 aa).

The Extracellular segment spans residues 1 to 41; that stretch reads MSQRQSQSPNQTLISITNDTETSSSVVSNDTTHKGWTGDNS. N-linked (GlcNAc...) asparagine glycosylation is found at N10, N18, and N29. The helical transmembrane segment at 42–63 threads the bilayer; the sequence is PGIEALCAIYITYAGIISVGIL. Residues 64 to 82 lie on the Cytoplasmic side of the membrane; the sequence is GNAILIKVFFKTKSMQTVP. The helical transmembrane segment at 83-103 threads the bilayer; the sequence is NIFITSLAFGDLLLLLTCVPV. Topologically, residues 104–121 are extracellular; sequence DATHYLAEGWLFGKVGCK. C120 and C203 are joined by a disulfide. Residues 122–143 form a helical membrane-spanning segment; sequence VLSFIRLTSVGVSVFTLTILSA. Residues 144-163 lie on the Cytoplasmic side of the membrane; that stretch reads DRYKAVVKPLERQPPNAILK. The chain crosses the membrane as a helical span at residues 164–184; the sequence is TCAKAGGIWIVSMIFALPEAI. Residues 185 to 220 are Extracellular-facing; the sequence is FSNVYTFQDPNRNVTFESCNSYPISERLLQEIHSLL. Residues 221–241 form a helical membrane-spanning segment; that stretch reads CFLVFYIIPLSIISVYYSLIA. The Cytoplasmic portion of the chain corresponds to 242-272; sequence RTLYKSTLNIPTEEQSHARKQIESRKRIAKT. The chain crosses the membrane as a helical span at residues 273–293; sequence VLVLVALFALCWLPNHLLYLY. The Extracellular segment spans residues 294-313; sequence HSFTYESYANHSDVPFVIII. Residues 314–333 form a helical membrane-spanning segment; sequence FSRVLAFSNSCVNPFALYWL. The Cytoplasmic portion of the chain corresponds to 334-399; the sequence is SKTFQQHFKA…SSAKKGEDKV (66 aa). C347 carries S-palmitoyl cysteine lipidation.

Belongs to the G-protein coupled receptor 1 family. As to quaternary structure, interacts with C6orf89.

The protein resides in the cell membrane. In terms of biological role, role in sperm cell division, maturation, or function. This receptor mediates its action by association with G proteins that activate a phosphatidylinositol-calcium second messenger system. The polypeptide is Bombesin receptor subtype-3 (Brs3) (Mus musculus (Mouse)).